A 360-amino-acid polypeptide reads, in one-letter code: Peptide chain release factor 1 (360 aa).

Glutamine 237 is subject to N5-methylglutamine.

This sequence belongs to the prokaryotic/mitochondrial release factor family. In terms of processing, methylated by PrmC. Methylation increases the termination efficiency of RF1.

The protein resides in the cytoplasm. Its function is as follows. Peptide chain release factor 1 directs the termination of translation in response to the peptide chain termination codons UAG and UAA. The polypeptide is Peptide chain release factor 1 (Pseudomonas entomophila (strain L48)).